Consider the following 400-residue polypeptide: Large envelope protein (400 aa).

An N-acetylmethionine modification is found at methionine 1. Glycine 2 carries N-myristoyl glycine; by host lipidation. The interval 2–119 is pre-S1; the sequence is GGRLPKPRKG…PPLRDSHPQA (118 aa). The interval 2–174 is pre-S; sequence GGRLPKPRKG…SSRIGDPAPT (173 aa). The Virion surface; in external conformation segment spans residues 2 to 181; sequence GGRLPKPRKG…APTMENITSG (180 aa). Topologically, residues 2 to 253 are intravirion; in internal conformation; that stretch reads GGRLPKPRKG…PGYRWMCLRR (252 aa). Arginine 4 is a glycosylation site (N-linked (GlcNAc...) asparagine). The segment at 84–116 is disordered; that stretch reads TLTTVPAVPPPASTNRQSGRQPTPISPPLRDSH. Over residues 96-106 the composition is skewed to polar residues; sequence STNRQSGRQPT. The segment at 120–174 is pre-S2; it reads MQWNSTKFHQTLQDPRVRGLYFPAGGSSSGTVNPAPNIASHISSISSRIGDPAPT. The chain crosses the membrane as a helical span at residues 182 to 202; sequence FLGPLLVLQAGFFLLTRILTI. Residues 203 to 253 are Intravirion; in external conformation-facing; sequence PQSLDSWWTSLNFLGEAPVCLGQNSQSPTSNHSPTSCPPICPGYRWMCLRR. The helical transmembrane segment at 254-274 threads the bilayer; it reads FIIFLFILLLCLIFLLVLLDC. Residues 275-348 lie on the Virion surface side of the membrane; that stretch reads QGMLPVCPLI…WASVRFSWLS (74 aa). Asparagine 320 is a glycosylation site (N-linked (GlcNAc...) asparagine; by host). A helical transmembrane segment spans residues 349–369; it reads LLVPFVQWFVGLSPTVWLSVI. At 370 to 375 the chain is on the intravirion side; it reads WMMWYW. A helical transmembrane segment spans residues 376–398; that stretch reads GPSLYNILSPFIPLLPIFFCLWV. At 399 to 400 the chain is on the virion surface side; that stretch reads YI.

Belongs to the orthohepadnavirus major surface antigen family. As to quaternary structure, in its internal form (Li-HBsAg), interacts with the capsid protein and with the isoform S. Interacts with host chaperone CANX. Associates with host chaperone CANX through its pre-S2 N glycan; this association may be essential for isoform M proper secretion. In terms of assembly, interacts with isoform L. Interacts with the antigens of satellite virus HDV (HDVAgs); this interaction is required for encapsidation of HDV genomic RNA. Post-translationally, isoform M is N-terminally acetylated by host at a ratio of 90%, and N-glycosylated by host at the pre-S2 region. In terms of processing, myristoylated.

Its subcellular location is the virion membrane. In terms of biological role, the large envelope protein exists in two topological conformations, one which is termed 'external' or Le-HBsAg and the other 'internal' or Li-HBsAg. In its external conformation the protein attaches the virus to cell receptors and thereby initiating infection. This interaction determines the species specificity and liver tropism. This attachment induces virion internalization predominantly through caveolin-mediated endocytosis. The large envelope protein also assures fusion between virion membrane and endosomal membrane. In its internal conformation the protein plays a role in virion morphogenesis and mediates the contact with the nucleocapsid like a matrix protein. The middle envelope protein plays an important role in the budding of the virion. It is involved in the induction of budding in a nucleocapsid independent way. In this process the majority of envelope proteins bud to form subviral lipoprotein particles of 22 nm of diameter that do not contain a nucleocapsid. This Hepatitis B virus genotype A3 (isolate Cameroon/CMR711/1994) (HBV-A) protein is Large envelope protein.